Reading from the N-terminus, the 649-residue chain is Lipoteichoic acid synthase 2 (649 aa).

The Cytoplasmic portion of the chain corresponds to 1-9 (MKTFIKERG). The helical transmembrane segment at 10 to 30 (LAFFLIAVVLLWIKTYVGYVL) threads the bilayer. The Extracellular portion of the chain corresponds to 31 to 42 (NFNLGIDNTIQK). Residues 43 to 63 (ILLFVNPLSSSLFFLGFGLLF) form a helical membrane-spanning segment. Topologically, residues 64-69 (KKKLQQ) are cytoplasmic. The chain crosses the membrane as a helical span at residues 70-90 (TAIIVIHFLMSFLLYANIVYY). At 91–118 (RFFNDFITIPVIMQAKTNGGQLGDSAFS) the chain is on the extracellular side. The chain crosses the membrane as a helical span at residues 119-139 (LMRPTDAFYFIDTIILIILAI). At 140-151 (KVNKPAETSSKK) the chain is on the cytoplasmic side. Residues 152-172 (SFRIIFASSILVFLINLAVAE) form a helical membrane-spanning segment. Over 173–649 (SDRPELLTRS…SETSKDNEDK (477 aa)) the chain is Extracellular. 2 residues coordinate Mn(2+): glutamate 253 and threonine 297. Threonine 297 is an active-site residue. A substrate-binding site is contributed by histidine 412. The Mn(2+) site is built by aspartate 471 and histidine 472. The interval 622–649 (FKKVNPSDYDYTKHDEDSSETSKDNEDK) is disordered. Positions 631 to 649 (DYTKHDEDSSETSKDNEDK) are enriched in basic and acidic residues.

Belongs to the LTA synthase family. Proteolytically cleaved.

The protein resides in the cell membrane. Its subcellular location is the secreted. Its pathway is cell wall biogenesis; lipoteichoic acid biosynthesis. In terms of biological role, catalyzes the polymerization of lipoteichoic acid (LTA) polyglycerol phosphate, a reaction that presumably uses phosphatidylglycerol (PG) as substrate. The protein is Lipoteichoic acid synthase 2 (ltaS2) of Bacillus subtilis (strain 168).